The chain runs to 361 residues: UDP-N-acetylglucosamine--N-acetylmuramyl-(pentapeptide) pyrophosphoryl-undecaprenol N-acetylglucosamine transferase (361 aa).

UDP-N-acetyl-alpha-D-glucosamine contacts are provided by residues 12–14 (TGG), N126, R167, S192, I247, and Q292.

It belongs to the glycosyltransferase 28 family. MurG subfamily.

The protein localises to the cell inner membrane. It catalyses the reaction di-trans,octa-cis-undecaprenyl diphospho-N-acetyl-alpha-D-muramoyl-L-alanyl-D-glutamyl-meso-2,6-diaminopimeloyl-D-alanyl-D-alanine + UDP-N-acetyl-alpha-D-glucosamine = di-trans,octa-cis-undecaprenyl diphospho-[N-acetyl-alpha-D-glucosaminyl-(1-&gt;4)]-N-acetyl-alpha-D-muramoyl-L-alanyl-D-glutamyl-meso-2,6-diaminopimeloyl-D-alanyl-D-alanine + UDP + H(+). Its pathway is cell wall biogenesis; peptidoglycan biosynthesis. Its function is as follows. Cell wall formation. Catalyzes the transfer of a GlcNAc subunit on undecaprenyl-pyrophosphoryl-MurNAc-pentapeptide (lipid intermediate I) to form undecaprenyl-pyrophosphoryl-MurNAc-(pentapeptide)GlcNAc (lipid intermediate II). In Syntrophus aciditrophicus (strain SB), this protein is UDP-N-acetylglucosamine--N-acetylmuramyl-(pentapeptide) pyrophosphoryl-undecaprenol N-acetylglucosamine transferase.